Reading from the N-terminus, the 317-residue chain is Melanocyte-stimulating hormone receptor (317 aa).

The Extracellular segment spans residues 1–37 (MAVQGSQRRLLGSLNSTPTAIPQLGLAANQTGAWCLE). Asn-29 is a glycosylation site (N-linked (GlcNAc...) asparagine). The helical transmembrane segment at 38-63 (VSIPDGLFLSLGLVSLVENVLVVATI) threads the bilayer. The Cytoplasmic portion of the chain corresponds to 64 to 72 (AKNRNLHSP). A helical transmembrane segment spans residues 73–93 (MYCFICCLALSDLLVSGGNVL). The Extracellular segment spans residues 94–118 (ETAVILLLEAGALAARAAVVQQLDN). Residues 119–140 (VIDVITCSSMLSSLCFLGAIAV) form a helical membrane-spanning segment. The Cytoplasmic segment spans residues 141 to 163 (DRYISIFYALRYHSIVTLPRARR). Residues 164 to 183 (AIAAIWVASVLFSTLFIAYY) traverse the membrane as a helical segment. Residues 184–191 (DHAAVLLC) are Extracellular-facing. Residues 192 to 211 (LVVFFLAMLVLMAVLYVHML) traverse the membrane as a helical segment. The Cytoplasmic segment spans residues 212–240 (ARACQHAQGIARLHKRQRPVHQGFGLKGA). The chain crosses the membrane as a helical span at residues 241–266 (VTLTILLGIFFLCWGPFFLHLTLIVL). Topologically, residues 267 to 279 (CPQHPTCSCIFKN) are extracellular. Residues 280-300 (FNLFLALIICNAIIDPLIYAF) traverse the membrane as a helical segment. Residues 301–317 (RSQELRRTLKEVLTCSW) lie on the Cytoplasmic side of the membrane. The S-palmitoyl cysteine moiety is linked to residue Cys-315.

Belongs to the G-protein coupled receptor 1 family. As to quaternary structure, interacts with MGRN1, but does not undergo MGRN1-mediated ubiquitination; this interaction competes with GNAS-binding and thus inhibits agonist-induced cAMP production. Interacts with OPN3; the interaction results in a decrease in MC1R-mediated cAMP signaling and ultimately a decrease in melanin production in melanocytes.

The protein localises to the cell membrane. Its function is as follows. Receptor for MSH (alpha, beta and gamma) and ACTH. The activity of this receptor is mediated by G proteins which activate adenylate cyclase. Mediates melanogenesis, the production of eumelanin (black/brown) and phaeomelanin (red/yellow), via regulation of cAMP signaling in melanocytes. This is Melanocyte-stimulating hormone receptor (MC1R) from Pongo pygmaeus (Bornean orangutan).